We begin with the raw amino-acid sequence, 266 residues long: Vitamin B12-binding protein (266 aa).

An N-terminal signal peptide occupies residues 1 to 22 (MAKSLFRALVALSFLAPLWLNA). Residues 25–266 (RVITLSPANT…QLCNALSQVD (242 aa)) enclose the Fe/B12 periplasmic-binding domain. Cyanocob(III)alamin contacts are provided by residues tyrosine 50 and 242–246 (DWFER). A disulfide bridge links cysteine 183 with cysteine 259.

It belongs to the BtuF family. As to quaternary structure, the complex is composed of two ATP-binding proteins (BtuD), two transmembrane proteins (BtuC) and a solute-binding protein (BtuF).

The protein resides in the periplasm. Its function is as follows. Part of the ABC transporter complex BtuCDF involved in vitamin B12 import. Binds vitamin B12 and delivers it to the periplasmic surface of BtuC. This Shigella flexneri protein is Vitamin B12-binding protein.